A 247-amino-acid chain; its full sequence is Carboxy-S-adenosyl-L-methionine synthase (247 aa).

S-adenosyl-L-methionine-binding positions include tyrosine 39, glycine 64–serine 66, aspartate 89–asparagine 90, aspartate 117–isoleucine 118, asparagine 132, and arginine 199.

It belongs to the class I-like SAM-binding methyltransferase superfamily. Cx-SAM synthase family. Homodimer.

It catalyses the reaction prephenate + S-adenosyl-L-methionine = carboxy-S-adenosyl-L-methionine + 3-phenylpyruvate + H2O. Catalyzes the conversion of S-adenosyl-L-methionine (SAM) to carboxy-S-adenosyl-L-methionine (Cx-SAM). The polypeptide is Carboxy-S-adenosyl-L-methionine synthase (Salmonella paratyphi B (strain ATCC BAA-1250 / SPB7)).